A 181-amino-acid chain; its full sequence is Large ribosomal subunit protein uL5c (181 aa).

It belongs to the universal ribosomal protein uL5 family. As to quaternary structure, part of the 50S ribosomal subunit; contacts the 5S rRNA.

It is found in the plastid. The protein localises to the cyanelle. Functionally, binds 5S rRNA, forms part of the central protuberance of the 50S subunit. This Cyanophora paradoxa protein is Large ribosomal subunit protein uL5c (rpl5).